The following is a 241-amino-acid chain: Phycocyanobilin:ferredoxin oxidoreductase (241 aa).

Belongs to the HY2 family.

The enzyme catalyses (2R,3Z)-phycocyanobilin + 4 oxidized [2Fe-2S]-[ferredoxin] = biliverdin IXalpha + 4 reduced [2Fe-2S]-[ferredoxin] + 4 H(+). In terms of biological role, catalyzes the four-electron reduction of biliverdin IX-alpha (2-electron reduction at both the A and D rings); the reaction proceeds via an isolatable 2-electron intermediate, 181,182-dihydrobiliverdin. This is Phycocyanobilin:ferredoxin oxidoreductase from Prochlorococcus marinus (strain MIT 9312).